The chain runs to 642 residues: Threonine--tRNA ligase (642 aa).

Residues aspartate 239 to proline 530 form a catalytic region. Residues cysteine 331, histidine 382, and histidine 507 each coordinate Zn(2+).

The protein belongs to the class-II aminoacyl-tRNA synthetase family. Homodimer. It depends on Zn(2+) as a cofactor.

It is found in the cytoplasm. The enzyme catalyses tRNA(Thr) + L-threonine + ATP = L-threonyl-tRNA(Thr) + AMP + diphosphate + H(+). Catalyzes the attachment of threonine to tRNA(Thr) in a two-step reaction: L-threonine is first activated by ATP to form Thr-AMP and then transferred to the acceptor end of tRNA(Thr). Also edits incorrectly charged L-seryl-tRNA(Thr). In Lawsonia intracellularis (strain PHE/MN1-00), this protein is Threonine--tRNA ligase.